A 659-amino-acid polypeptide reads, in one-letter code: Zeaxanthin epoxidase, chloroplastic (659 aa).

A chloroplast-targeting transit peptide spans 1–50 (MALLSATAPAKTRFSLFSHEEAQHPHPHALSACCGGGASGKRQRARARVA). FAD-binding positions include 79 to 107 (RVLV…TVFE) and 357 to 370 (TFNW…LLGD). The FHA domain occupies 553 to 607 (LSIGSRSDPSNSTASLALPLPQISENHATITCKNKAFYVTDNGSEHGTWITDNEG).

The cofactor is FAD. Expressed in young microspores.

The protein localises to the plastid. The protein resides in the chloroplast membrane. Its subcellular location is the chloroplast thylakoid membrane. It carries out the reaction all-trans-zeaxanthin + 4 reduced [2Fe-2S]-[ferredoxin] + 2 O2 + 4 H(+) = all-trans-violaxanthin + 4 oxidized [2Fe-2S]-[ferredoxin] + 2 H2O. It functions in the pathway plant hormone biosynthesis; abscisate biosynthesis. Its function is as follows. Zeaxanthin epoxidase that plays an important role in the xanthophyll cycle and abscisic acid (ABA) biosynthesis. Converts zeaxanthin into antheraxanthin and subsequently violaxanthin. Required for resistance to osmotic and drought stresses, seed development and dormancy. This is Zeaxanthin epoxidase, chloroplastic (ZEP) from Oryza sativa subsp. japonica (Rice).